A 121-amino-acid chain; its full sequence is Large ribosomal subunit protein uL18 (121 aa).

Belongs to the universal ribosomal protein uL18 family. As to quaternary structure, part of the 50S ribosomal subunit; part of the 5S rRNA/L5/L18/L25 subcomplex. Contacts the 5S and 23S rRNAs.

In terms of biological role, this is one of the proteins that bind and probably mediate the attachment of the 5S RNA into the large ribosomal subunit, where it forms part of the central protuberance. In Paraburkholderia phytofirmans (strain DSM 17436 / LMG 22146 / PsJN) (Burkholderia phytofirmans), this protein is Large ribosomal subunit protein uL18.